The chain runs to 271 residues: uncharacterized protein (271 aa).

This is an uncharacterized protein from Human cytomegalovirus (strain Merlin) (HHV-5).